Consider the following 580-residue polypeptide: MHLSAVFNALLVSVLAAVLWKHVRLREHAATLEEELALGRQATEPAPALRIDYPKALQILMEGGTHMVCTGRTHTDRICRFKWLCYSNEAEEFIFFHGNTSVMLPNLGSRRFQPALLDLSTVEDHNTQYFNFVELPAAALRFMPKPVFVPDVALIANRFNPDNLMHVFHDDLLPLFYTLRQFPGLAHEARLFFMEGWGEGAHFDLYKLLSPKQPLLRAQLKTLGRLLCFSHAFVGLSKITTWYQYGFVQPQGPKANILVSGNEIRQFARFMTEKLNVSHTGVPLGEEYILVFSRTQNRLILNEAELLLALAQEFQMKTVTVSLEDHAFADVVRLVSNASMLVSMHGAQLVTTLFLPRGATVVELFPYAVNPDHYTPYKTLAMLPGMDLQYVAWRNMMPENTVTHPERPWDQGGITHLDRAEQARILQSREVPRHLCCRNPEWLFRIYQDTKVDIPSLIQTIRRVVKGRPGPRKQKWTVGLYPGKVREARCQASVHGASEARLTVSWQIPWNLKYLKVREVKYEVWLQEQGENTYVPYILALQNHTFTENIKPFTTYLVWVRCIFNKILLGPFADVLVCNT.

Topologically, residues 1-4 (MHLS) are cytoplasmic. Residues 5 to 25 (AVFNALLVSVLAAVLWKHVRL) traverse the membrane as a helical; Signal-anchor for type II membrane protein segment. Residues 26-580 (REHAATLEEE…PFADVLVCNT (555 aa)) are Lumenal-facing. N-linked (GlcNAc...) asparagine glycosylation is found at Asn-99 and Asn-276. A Fibronectin type-III domain is found at 488–580 (ARCQASVHGA…PFADVLVCNT (93 aa)).

The protein belongs to the glycosyltransferase 61 family.

Its subcellular location is the endoplasmic reticulum membrane. The catalysed reaction is 3-O-(alpha-D-mannosyl)-L-threonyl-[protein] + UDP-N-acetyl-alpha-D-glucosamine = 3-O-(N-acetyl-beta-D-glucosaminyl-(1-&gt;4)-alpha-D-mannosyl)-L-threonyl-[protein] + UDP + H(+). It participates in protein modification; protein glycosylation. Its function is as follows. O-linked mannose beta-1,4-N-acetylglucosaminyltransferase that transfers UDP-N-acetyl-D-glucosamine to the 4-position of the mannose to generate N-acetyl-D-glucosamine-beta-1,4-O-D-mannosylprotein. Involved in the biosynthesis of the phosphorylated O-mannosyl trisaccharide (N-acetylgalactosamine-beta-3-N-acetylglucosamine-beta-4-(phosphate-6-)mannose), a carbohydrate structure present in alpha-dystroglycan (DAG1), which is required for binding laminin G-like domain-containing extracellular proteins with high affinity. The polypeptide is Protein O-linked-mannose beta-1,4-N-acetylglucosaminyltransferase 2 (POMGNT2) (Pan troglodytes (Chimpanzee)).